We begin with the raw amino-acid sequence, 100 residues long: Small ribosomal subunit protein uS14 (100 aa).

This sequence belongs to the universal ribosomal protein uS14 family. As to quaternary structure, part of the 30S ribosomal subunit. Contacts proteins S3 and S10.

Binds 16S rRNA, required for the assembly of 30S particles and may also be responsible for determining the conformation of the 16S rRNA at the A site. In Nostoc sp. (strain PCC 7120 / SAG 25.82 / UTEX 2576), this protein is Small ribosomal subunit protein uS14.